Reading from the N-terminus, the 60-residue chain is Metallothionein A (60 aa).

Positions 1-28 are beta; sequence MDPCECSKSGNCNCGGSCTCTNCSCKSC. A divalent metal cation contacts are provided by Cys-4, Cys-6, Cys-12, Cys-14, Cys-18, Cys-20, Cys-23, Cys-25, Cys-28, Cys-32, Cys-33, Cys-35, Cys-36, Cys-40, Cys-43, Cys-47, Cys-49, Cys-54, Cys-58, and Cys-59. Residues 29–60 form an alpha region; that stretch reads KKSCCPCCPSGCTKCASGCVCKGKTCDTSCCQ.

This sequence belongs to the metallothionein superfamily. Type 1 family.

Metallothioneins have a high content of cysteine residues that bind various heavy metals. This chain is Metallothionein A (mta), found in Parachaenichthys charcoti (Charcot's dragonfish).